The chain runs to 287 residues: 26S proteasome non-ATPase regulatory subunit 8 (287 aa).

Position 43 is a phosphoserine (Ser-43). Positions 99–268 (PSFERYMAQL…QQKPEDTTIP (170 aa)) constitute a PCI domain. A Glycyl lysine isopeptide (Lys-Gly) (interchain with G-Cter in SUMO2) cross-link involves residue Lys-234.

The protein belongs to the proteasome subunit S14 family. In terms of assembly, component of the 19S proteasome regulatory particle complex. The 26S proteasome consists of a 20S core particle (CP) and two 19S regulatory subunits (RP). The regulatory particle is made of a lid composed of 9 subunits including PSMD8, a base containing 6 ATPases and few additional components. Interacts with DDI2. Interacts with TASOR.

Its function is as follows. Component of the 26S proteasome, a multiprotein complex involved in the ATP-dependent degradation of ubiquitinated proteins. This complex plays a key role in the maintenance of protein homeostasis by removing misfolded or damaged proteins, which could impair cellular functions, and by removing proteins whose functions are no longer required. Therefore, the proteasome participates in numerous cellular processes, including cell cycle progression, apoptosis, or DNA damage repair. This is 26S proteasome non-ATPase regulatory subunit 8 (PSMD8) from Bos taurus (Bovine).